Here is a 254-residue protein sequence, read N- to C-terminus: Glycerol operon regulatory protein (254 aa).

An HTH iclR-type domain is found at 5–67 (IQSLERAAAM…DASGRYQLGA (63 aa)). The segment at residues 27-46 (LSDIASSLGLAKGTAHGILR) is a DNA-binding region (H-T-H motif). The 170-residue stretch at 82–251 (LRARALVWTD…ARAVSRDLGA (170 aa)) folds into the IclR-ED domain.

Its function is as follows. May be an activator protein for the gylABX operon. This Streptomyces coelicolor (strain ATCC BAA-471 / A3(2) / M145) protein is Glycerol operon regulatory protein (gylR).